We begin with the raw amino-acid sequence, 207 residues long: Small ribosomal subunit protein uS4 (207 aa).

One can recognise an S4 RNA-binding domain in the interval 97 to 160; it reads SRLDNVVYRM…KKQARIVEAL (64 aa).

It belongs to the universal ribosomal protein uS4 family. In terms of assembly, part of the 30S ribosomal subunit. Contacts protein S5. The interaction surface between S4 and S5 is involved in control of translational fidelity.

Functionally, one of the primary rRNA binding proteins, it binds directly to 16S rRNA where it nucleates assembly of the body of the 30S subunit. In terms of biological role, with S5 and S12 plays an important role in translational accuracy. The polypeptide is Small ribosomal subunit protein uS4 (Burkholderia pseudomallei (strain 1106a)).